Consider the following 69-residue polypeptide: Putative membrane protein insertion efficiency factor (69 aa).

The protein belongs to the UPF0161 family.

It is found in the cell inner membrane. Could be involved in insertion of integral membrane proteins into the membrane. The protein is Putative membrane protein insertion efficiency factor of Geobacter metallireducens (strain ATCC 53774 / DSM 7210 / GS-15).